Consider the following 1318-residue polypeptide: Uromodulin-like 1 (1318 aa).

An N-terminal signal peptide occupies residues 1–21 (MLRTSGLALLALVSAVGPSQA). Topologically, residues 22–1272 (SGFTEKGLSL…HAEAGLGAGY (1251 aa)) are extracellular. The EMI domain occupies 33-106 (GYQLCSHRVT…YEQLGLYCVL (74 aa)). Intrachain disulfides connect cysteine 37–cysteine 94, cysteine 61–cysteine 70, and cysteine 93–cysteine 104. Asparagine 89 carries N-linked (GlcNAc...) asparagine glycosylation. Asparagine 109 carries N-linked (GlcNAc...) asparagine glycosylation. The WAP domain occupies 114–158 (FTSRPGACPAEGPEPSTSPCSLDIDCPGLEKCCPWSGGRYCMAPA). Asparagine 172 carries an N-linked (GlcNAc...) asparagine glycan. The region spanning 264-313 (DVNECFYEELNACSGRELCANLEGSYWCVCHQEAPATSPRKLNLEWEDCP) is the EGF-like 1; calcium-binding domain. The region spanning 314–398 (PVSDYVVLNV…TTLTIKTNAQ (85 aa)) is the Fibronectin type-III 1 domain. N-linked (GlcNAc...) asparagine glycosylation is found at asparagine 322, asparagine 335, and asparagine 417. The SEA 1 domain occupies 396 to 510 (NAQVFEVTIK…QGTRVQDWDE (115 aa)). In terms of domain architecture, EGF-like 2; calcium-binding spans 507 to 552 (DWDECVDSAEHDCSPAAWCINLEGSYTCQCRTTRDATPSRAGRACE). 3 disulfide bridges follow: cysteine 511/cysteine 525, cysteine 519/cysteine 534, and cysteine 536/cysteine 551. The N-linked (GlcNAc...) asparagine glycan is linked to asparagine 585. Positions 593–655 (GYPQGTPAAG…PSPTEDPTGH (63 aa)) are disordered. A Fibronectin type-III 2 domain is found at 702 to 791 (VPVSIGRIMV…HLKVRTAARK (90 aa)). N-linked (GlcNAc...) asparagine glycosylation occurs at asparagine 713. The 113-residue stretch at 788–900 (AARKLIGKVR…GDTFIQDYDE (113 aa)) folds into the SEA 2 domain. The 42-residue stretch at 897–938 (DYDECERKEDDCVPGTSCRNTLGSFTCSCEGGAPDFPVEYSE) folds into the EGF-like 3; calcium-binding domain. 2 disulfides stabilise this stretch: cysteine 901–cysteine 914 and cysteine 908–cysteine 923. Positions 938-957 (ERPCEGDSPGNETWATSPER) are disordered. Residues asparagine 984 and asparagine 1050 are each glycosylated (N-linked (GlcNAc...) asparagine). One can recognise a ZP domain in the interval 992–1235 (LCEIEKVVVA…ATCKINCNNF (244 aa)). Cysteine 1157 and cysteine 1215 are joined by a disulfide. Residues 1273–1293 (VVLIVVAIFVLVAGTATLLIV) form a helical membrane-spanning segment. At 1294–1318 (RYQRMNGRYNFKIQSNNFSYQVFYE) the chain is on the cytoplasmic side.

As to expression, isoform 4 is expressed at low level in kidney, testis and fetal thymus. Isoform 3 is expressed at low level in prostate, testis and fetal thymus.

The protein resides in the cell membrane. It localises to the cytoplasm. The sequence is that of Uromodulin-like 1 (UMODL1) from Homo sapiens (Human).